A 187-amino-acid polypeptide reads, in one-letter code: Ethylene-responsive transcription factor ERF015 (187 aa).

A DNA-binding region (AP2/ERF) is located at residues Cys26–Pro83.

It belongs to the AP2/ERF transcription factor family. ERF subfamily.

The protein resides in the nucleus. Its function is as follows. Probably acts as a transcriptional activator. Binds to the GCC-box pathogenesis-related promoter element. May be involved in the regulation of gene expression by stress factors and by components of stress signal transduction pathways. The chain is Ethylene-responsive transcription factor ERF015 (ERF015) from Arabidopsis thaliana (Mouse-ear cress).